Consider the following 195-residue polypeptide: Imidazoleglycerol-phosphate dehydratase (195 aa).

It belongs to the imidazoleglycerol-phosphate dehydratase family.

It localises to the cytoplasm. It catalyses the reaction D-erythro-1-(imidazol-4-yl)glycerol 3-phosphate = 3-(imidazol-4-yl)-2-oxopropyl phosphate + H2O. The protein operates within amino-acid biosynthesis; L-histidine biosynthesis; L-histidine from 5-phospho-alpha-D-ribose 1-diphosphate: step 6/9. In Alkaliphilus metalliredigens (strain QYMF), this protein is Imidazoleglycerol-phosphate dehydratase.